The following is a 321-amino-acid chain: Major immediate early protein (321 aa).

The RING-type zinc-finger motif lies at Cys86 to Asn139. The leucine-zipper stretch occupies residues Leu228–Leu249.

Its subcellular location is the host nucleus. Plays some regulatory role in both viral DNA replication and transcriptional transactivation. The polypeptide is Major immediate early protein (PE38) (Lepidoptera (butterflies and moths)).